We begin with the raw amino-acid sequence, 293 residues long: Nucleotide-binding protein BCQ_4976 (293 aa).

14 to 21 (GMSGAGKT) is a binding site for ATP. 65–68 (DLRG) serves as a coordination point for GTP.

The protein belongs to the RapZ-like family.

In terms of biological role, displays ATPase and GTPase activities. This is Nucleotide-binding protein BCQ_4976 from Bacillus cereus (strain Q1).